A 209-amino-acid polypeptide reads, in one-letter code: GTP cyclohydrolase-2 (209 aa).

GTP is bound at residue 49-53; that stretch reads RIHSE. C54, C65, and C67 together coordinate Zn(2+). GTP contacts are provided by residues Q70, 92–94, and T114; that span reads EGR. The Proton acceptor role is filled by D126. Residue R128 is the Nucleophile of the active site. 2 residues coordinate GTP: T149 and K154.

This sequence belongs to the GTP cyclohydrolase II family. Zn(2+) serves as cofactor.

It carries out the reaction GTP + 4 H2O = 2,5-diamino-6-hydroxy-4-(5-phosphoribosylamino)-pyrimidine + formate + 2 phosphate + 3 H(+). It functions in the pathway cofactor biosynthesis; riboflavin biosynthesis; 5-amino-6-(D-ribitylamino)uracil from GTP: step 1/4. Its function is as follows. Catalyzes the conversion of GTP to 2,5-diamino-6-ribosylamino-4(3H)-pyrimidinone 5'-phosphate (DARP), formate and pyrophosphate. The protein is GTP cyclohydrolase-2 of Shewanella halifaxensis (strain HAW-EB4).